Consider the following 65-residue polypeptide: Ringhalexin (65 aa).

Cystine bridges form between C3–C24, C17–C42, C46–C57, and C58–C63.

In terms of tissue distribution, expressed by the venom gland.

It is found in the secreted. Its function is as follows. Has anticoagulant activity, since it is able to inhibit the activation of coagulation factor X (F10) by coagulation factor VIIa (F7) (IC(50)=123.8 nM). Also shows weak irreversible neurotoxicity. The polypeptide is Ringhalexin (Hemachatus haemachatus (Rinkhals)).